Here is a 119-residue protein sequence, read N- to C-terminus: Large ribosomal subunit protein bL19 (119 aa).

It belongs to the bacterial ribosomal protein bL19 family.

This protein is located at the 30S-50S ribosomal subunit interface and may play a role in the structure and function of the aminoacyl-tRNA binding site. The protein is Large ribosomal subunit protein bL19 of Leuconostoc mesenteroides subsp. mesenteroides (strain ATCC 8293 / DSM 20343 / BCRC 11652 / CCM 1803 / JCM 6124 / NCDO 523 / NBRC 100496 / NCIMB 8023 / NCTC 12954 / NRRL B-1118 / 37Y).